The chain runs to 180 residues: Nucleoside triphosphate/diphosphate phosphatase (180 aa).

Arginine 26 acts as the Proton donor in catalysis. The Mg(2+) site is built by asparagine 90, aspartate 106, aspartate 108, aspartate 110, aspartate 123, and glutamate 126.

Belongs to the Ntdp family. Mg(2+) is required as a cofactor.

It carries out the reaction a ribonucleoside 5'-triphosphate + H2O = a ribonucleoside 5'-diphosphate + phosphate + H(+). The catalysed reaction is a ribonucleoside 5'-diphosphate + H2O = a ribonucleoside 5'-phosphate + phosphate + H(+). In terms of biological role, has nucleoside phosphatase activity towards nucleoside triphosphates and nucleoside diphosphates. In Staphylococcus aureus (strain MRSA252), this protein is Nucleoside triphosphate/diphosphate phosphatase.